The sequence spans 237 residues: Phosphoribosylaminoimidazole-succinocarboxamide synthase (237 aa).

The protein belongs to the SAICAR synthetase family.

The enzyme catalyses 5-amino-1-(5-phospho-D-ribosyl)imidazole-4-carboxylate + L-aspartate + ATP = (2S)-2-[5-amino-1-(5-phospho-beta-D-ribosyl)imidazole-4-carboxamido]succinate + ADP + phosphate + 2 H(+). It functions in the pathway purine metabolism; IMP biosynthesis via de novo pathway; 5-amino-1-(5-phospho-D-ribosyl)imidazole-4-carboxamide from 5-amino-1-(5-phospho-D-ribosyl)imidazole-4-carboxylate: step 1/2. In Escherichia coli O7:K1 (strain IAI39 / ExPEC), this protein is Phosphoribosylaminoimidazole-succinocarboxamide synthase.